The primary structure comprises 939 residues: Valine--tRNA ligase (939 aa).

The 'HIGH' region motif lies at 47-57 (PNVTGILHMGH). Positions 563 to 567 (KLSKS) match the 'KMSKS' region motif. Position 566 (lysine 566) interacts with ATP. The stretch at 874–939 (EHLAKERVRL…QSILDKLASL (66 aa)) forms a coiled coil.

It belongs to the class-I aminoacyl-tRNA synthetase family. ValS type 1 subfamily. As to quaternary structure, monomer.

The protein localises to the cytoplasm. It catalyses the reaction tRNA(Val) + L-valine + ATP = L-valyl-tRNA(Val) + AMP + diphosphate. Catalyzes the attachment of valine to tRNA(Val). As ValRS can inadvertently accommodate and process structurally similar amino acids such as threonine, to avoid such errors, it has a 'posttransfer' editing activity that hydrolyzes mischarged Thr-tRNA(Val) in a tRNA-dependent manner. The protein is Valine--tRNA ligase of Chlamydia trachomatis serovar L2b (strain UCH-1/proctitis).